The sequence spans 99 residues: Aspartyl/glutamyl-tRNA(Asn/Gln) amidotransferase subunit C (99 aa).

It belongs to the GatC family. Heterotrimer of A, B and C subunits.

It carries out the reaction L-glutamyl-tRNA(Gln) + L-glutamine + ATP + H2O = L-glutaminyl-tRNA(Gln) + L-glutamate + ADP + phosphate + H(+). The catalysed reaction is L-aspartyl-tRNA(Asn) + L-glutamine + ATP + H2O = L-asparaginyl-tRNA(Asn) + L-glutamate + ADP + phosphate + 2 H(+). Functionally, allows the formation of correctly charged Asn-tRNA(Asn) or Gln-tRNA(Gln) through the transamidation of misacylated Asp-tRNA(Asn) or Glu-tRNA(Gln) in organisms which lack either or both of asparaginyl-tRNA or glutaminyl-tRNA synthetases. The reaction takes place in the presence of glutamine and ATP through an activated phospho-Asp-tRNA(Asn) or phospho-Glu-tRNA(Gln). This Bifidobacterium longum (strain NCC 2705) protein is Aspartyl/glutamyl-tRNA(Asn/Gln) amidotransferase subunit C.